The following is a 345-amino-acid chain: Protein-glutamate methylesterase/protein-glutamine glutaminase 2 (345 aa).

Residues 7 to 124 (KVLVVDDSPV…TADMLGYRSL (118 aa)) enclose the Response regulatory domain. Asp58 carries the post-translational modification 4-aspartylphosphate. The CheB-type methylesterase domain maps to 154 to 345 (STSQYQLIAI…LPQFLCDLLS (192 aa)). Active-site residues include Ser166, His192, and Asp289.

This sequence belongs to the CheB family. In terms of processing, phosphorylated by CheA. Phosphorylation of the N-terminal regulatory domain activates the methylesterase activity.

The protein resides in the cytoplasm. The catalysed reaction is [protein]-L-glutamate 5-O-methyl ester + H2O = L-glutamyl-[protein] + methanol + H(+). It catalyses the reaction L-glutaminyl-[protein] + H2O = L-glutamyl-[protein] + NH4(+). In terms of biological role, involved in chemotaxis. Part of a chemotaxis signal transduction system that modulates chemotaxis in response to various stimuli. Catalyzes the demethylation of specific methylglutamate residues introduced into the chemoreceptors (methyl-accepting chemotaxis proteins or MCP) by CheR. Also mediates the irreversible deamidation of specific glutamine residues to glutamic acid. The polypeptide is Protein-glutamate methylesterase/protein-glutamine glutaminase 2 (Vibrio vulnificus (strain YJ016)).